The primary structure comprises 345 residues: UDP-N-acetylenolpyruvoylglucosamine reductase (345 aa).

Residues 16 to 186 (LSVSASCIKV…TAVGIFLKKE (171 aa)) enclose the FAD-binding PCMH-type domain. Arg-162 is an active-site residue. Ser-232 acts as the Proton donor in catalysis. The active site involves Glu-328.

It belongs to the MurB family. FAD serves as cofactor.

It localises to the cytoplasm. The enzyme catalyses UDP-N-acetyl-alpha-D-muramate + NADP(+) = UDP-N-acetyl-3-O-(1-carboxyvinyl)-alpha-D-glucosamine + NADPH + H(+). It functions in the pathway cell wall biogenesis; peptidoglycan biosynthesis. Its function is as follows. Cell wall formation. This chain is UDP-N-acetylenolpyruvoylglucosamine reductase, found in Pectobacterium atrosepticum (strain SCRI 1043 / ATCC BAA-672) (Erwinia carotovora subsp. atroseptica).